A 95-amino-acid chain; its full sequence is Ribosome-binding factor A (95 aa).

Belongs to the RbfA family. Interacts with the 30S ribosomal subunit as a monomer, binding in a position overlapping the sites of the A and P site tRNAs, and displacing segments of the 16S rRNA. Probably contacts 16S rRNA and ribosomal protein S9 and S13.

The protein resides in the cytoplasm. One of several proteins that assist in the late maturation steps of the functional core of the 30S ribosomal subunit. Associates with free 30S ribosomal subunits (but not with 30S subunits that are part of 70S ribosomes or polysomes). Required for efficient processing of 16S rRNA. Probably interacts with the 5'-terminal helix region of 16S rRNA, bringing together different domains of the 30S ribosomal subunit which aids assembly. This is Ribosome-binding factor A from Thermus thermophilus (strain ATCC 27634 / DSM 579 / HB8).